The primary structure comprises 116 residues: MDNKPSGSKKIRQGDTVVAIAGNSRGQIGTVQSCKGDRVIVQGLNVRKKHVKRSQEAPKGRIVEIERPIHISNLKVCVEGETTAKLKVRTNEQGHRQFVYHKDDQEVVYRSVKKPK.

It belongs to the universal ribosomal protein uL24 family. In terms of assembly, part of the 50S ribosomal subunit.

Functionally, one of two assembly initiator proteins, it binds directly to the 5'-end of the 23S rRNA, where it nucleates assembly of the 50S subunit. One of the proteins that surrounds the polypeptide exit tunnel on the outside of the subunit. The protein is Large ribosomal subunit protein uL24 of Protochlamydia amoebophila (strain UWE25).